Here is a 35-residue protein sequence, read N- to C-terminus: Photosystem II reaction center protein T (35 aa).

A helical membrane pass occupies residues 3-23 (ALVYTFLLISTLGIIFFAIFF).

It belongs to the PsbT family. In terms of assembly, PSII is composed of 1 copy each of membrane proteins PsbA, PsbB, PsbC, PsbD, PsbE, PsbF, PsbH, PsbI, PsbJ, PsbK, PsbL, PsbM, PsbT, PsbY, PsbZ, Psb30/Ycf12, at least 3 peripheral proteins of the oxygen-evolving complex and a large number of cofactors. It forms dimeric complexes.

It is found in the plastid. The protein localises to the chloroplast thylakoid membrane. In terms of biological role, found at the monomer-monomer interface of the photosystem II (PS II) dimer, plays a role in assembly and dimerization of PSII. PSII is a light-driven water plastoquinone oxidoreductase, using light energy to abstract electrons from H(2)O, generating a proton gradient subsequently used for ATP formation. The chain is Photosystem II reaction center protein T from Welwitschia mirabilis (Tree tumbo).